Consider the following 422-residue polypeptide: 3-phosphoshikimate 1-carboxyvinyltransferase (422 aa).

3-phosphoshikimate-binding residues include Lys24, Ser25, and Arg29. Lys24 is a phosphoenolpyruvate binding site. Residues Gly93 and Arg121 each coordinate phosphoenolpyruvate. Positions 164, 165, 166, 308, and 335 each coordinate 3-phosphoshikimate. Gln166 provides a ligand contact to phosphoenolpyruvate. Catalysis depends on Glu308, which acts as the Proton acceptor. Phosphoenolpyruvate-binding residues include Arg339, Arg380, and Lys405.

Belongs to the EPSP synthase family. In terms of assembly, monomer.

The protein localises to the cytoplasm. The enzyme catalyses 3-phosphoshikimate + phosphoenolpyruvate = 5-O-(1-carboxyvinyl)-3-phosphoshikimate + phosphate. Its pathway is metabolic intermediate biosynthesis; chorismate biosynthesis; chorismate from D-erythrose 4-phosphate and phosphoenolpyruvate: step 6/7. Functionally, catalyzes the transfer of the enolpyruvyl moiety of phosphoenolpyruvate (PEP) to the 5-hydroxyl of shikimate-3-phosphate (S3P) to produce enolpyruvyl shikimate-3-phosphate and inorganic phosphate. The polypeptide is 3-phosphoshikimate 1-carboxyvinyltransferase (Saccharopolyspora erythraea (strain ATCC 11635 / DSM 40517 / JCM 4748 / NBRC 13426 / NCIMB 8594 / NRRL 2338)).